The sequence spans 1283 residues: Rab11 family-interacting protein 1 (1283 aa).

The 126-residue stretch at 1–126 (MSLMVSAGRG…DQGRRKTQWY (126 aa)) folds into the C2 domain. The segment covering 161 to 185 (SMKDKSRNPFGKLKDKIKGKNKDSG) has biased composition (basic and acidic residues). The segment at 161-281 (SMKDKSRNPF…VMSHKRTAST (121 aa)) is disordered. 4 positions are modified to phosphoserine: S184, S202, S206, and S234. The span at 225–239 (NLQKTPLSQSMSVLP) shows a compositional bias: polar residues. A compositionally biased stretch (acidic residues) spans 257-266 (WDEDDNEDES). 9 positions are modified to phosphoserine: S300, S315, S339, S341, S343, S345, S356, S357, and S382. 5 disordered regions span residues 330–727 (EAKG…QEVP), 741–782 (VGEL…ASVP), 835–913 (PQEL…LFRM), 969–993 (DERIDQVEDDGDQVEDDGETAKSST), and 1037–1141 (ASVT…RVEN). Over residues 419 to 433 (ATKEAKESKKPESRR) the composition is skewed to basic and acidic residues. Phosphoserine is present on S435. Over residues 442–451 (GKKDVAKGSE) the composition is skewed to basic and acidic residues. S477 is subject to Phosphoserine. Residues 482–491 (DLVRRSEKDT) show a composition bias toward basic and acidic residues. A phosphoserine mark is found at S529 and S545. Positions 588–612 (SSESPSVFSSLSSPIAAPISTSTPI) are enriched in low complexity. Polar residues predominate over residues 637-652 (QTESLTPVPNSGSSAL). The segment covering 698–715 (ETGRQEEELPRFPCKKQD) has biased composition (basic and acidic residues). S758 carries the phosphoserine modification. A compositionally biased stretch (basic and acidic residues) spans 855 to 866 (ESPHAEDSERES). Positions 975–986 (VEDDGDQVEDDG) are enriched in acidic residues. The segment covering 1037–1048 (ASVTAPSEQTTE) has biased composition (polar residues). Over residues 1116-1131 (SDTHHTSTAESQKKAT) the composition is skewed to basic and acidic residues. S1135 is modified (phosphoserine). In terms of domain architecture, FIP-RBD spans 1211 to 1273 (KKYSPSDPAF…EETPNILRIP (63 aa)). Residues 1219–1283 (AFAYAQLTHD…TQVGKKAGKM (65 aa)) form a necessary for interaction with RAB4A and RAB11A, subcellular location and endosomal recycling region.

In terms of assembly, interacts with RAB11A (GTP-bound form); the interaction induces RAB11FIP1 recruitment to membranes. Interacts with RAB14 (GTP-bound form). Homooligomer. Isoform 2 interacts with RAB4A, RAB11A, RAB11B and RAB25. According to PubMed:15280022, RAB4A binding to RAB11FIP1 is of very low affinity in vitro and in vivo. Isoform 2 is expressed in brain, heart, testis, lung, spleen, ovary and small intestine.

Its subcellular location is the recycling endosome. It is found in the cytoplasmic vesicle. The protein resides in the phagosome membrane. A Rab11 effector protein involved in the endosomal recycling process. Also involved in controlling membrane trafficking along the phagocytic pathway and in phagocytosis. Interaction with RAB14 may function in the process of neurite formation. This Homo sapiens (Human) protein is Rab11 family-interacting protein 1.